A 550-amino-acid polypeptide reads, in one-letter code: Glypican-1 (550 aa).

Residues 1–20 form the signal peptide; that stretch reads MRFFPWGFWLLCVASAPARG. Intrachain disulfides connect Cys29/Cys65, Cys59/Cys253, Cys66/Cys256, Cys188/Cys340, Cys243/Cys276, Cys265/Cys412, and Cys269/Cys398. Asn76 and Asn113 each carry an N-linked (GlcNAc...) asparagine glycan. An N-linked (GlcNAc...) asparagine glycan is attached at Asn382. Disordered regions lie at residues 475–494 and 502–522; these read FQDA…CPDD and KSPS…GHGV. Residues 481–494 show a composition bias toward low complexity; the sequence is DMSGSGSGDSCPDD. Residues Ser483, Ser485, and Ser487 are each glycosylated (O-linked (Xyl...) (heparan sulfate) serine). A lipid anchor (GPI-anchor amidated glycine) is attached at Gly524. Residues 525 to 550 constitute a propeptide, removed in mature form; the sequence is ASSRSLPSAFLLFLSGASIVVQHLWR.

Belongs to the glypican family. Post-translationally, O-glycosylated with heparan sulfate.

It is found in the cell membrane. It localises to the endosome. The protein localises to the secreted. The protein resides in the extracellular space. In terms of biological role, cell surface proteoglycan that bears heparan sulfate. Modulates Wnt-signaling pathway. This chain is Glypican-1 (GPC1), found in Gallus gallus (Chicken).